The chain runs to 121 residues: Small ribosomal subunit protein uS13 (121 aa).

A disordered region spans residues arginine 98 to lysine 121. A compositionally biased stretch (basic residues) spans valine 109 to lysine 121.

The protein belongs to the universal ribosomal protein uS13 family. In terms of assembly, part of the 30S ribosomal subunit. Forms a loose heterodimer with protein S19. Forms two bridges to the 50S subunit in the 70S ribosome.

In terms of biological role, located at the top of the head of the 30S subunit, it contacts several helices of the 16S rRNA. In the 70S ribosome it contacts the 23S rRNA (bridge B1a) and protein L5 of the 50S subunit (bridge B1b), connecting the 2 subunits; these bridges are implicated in subunit movement. Contacts the tRNAs in the A and P-sites. In Phytoplasma australiense, this protein is Small ribosomal subunit protein uS13.